Reading from the N-terminus, the 311-residue chain is Peptide methionine sulfoxide reductase MsrA/MsrB 2 (311 aa).

The tract at residues 1–155 (MHEIYLAGGC…PNGYCHINVN (155 aa)) is peptide methionine sulfoxide reductase A. Residue Cys-10 is part of the active site. One can recognise a MsrB domain in the interval 172–295 (DEELKKTLSP…NSLSIRFIPK (124 aa)). The active-site Nucleophile is the Cys-284.

The protein in the N-terminal section; belongs to the MsrA Met sulfoxide reductase family. In the C-terminal section; belongs to the MsrB Met sulfoxide reductase family.

It carries out the reaction L-methionyl-[protein] + [thioredoxin]-disulfide + H2O = L-methionyl-(S)-S-oxide-[protein] + [thioredoxin]-dithiol. The enzyme catalyses [thioredoxin]-disulfide + L-methionine + H2O = L-methionine (S)-S-oxide + [thioredoxin]-dithiol. It catalyses the reaction L-methionyl-[protein] + [thioredoxin]-disulfide + H2O = L-methionyl-(R)-S-oxide-[protein] + [thioredoxin]-dithiol. Has an important function as a repair enzyme for proteins that have been inactivated by oxidation. Catalyzes the reversible oxidation-reduction of methionine sulfoxide in proteins to methionine. The protein is Peptide methionine sulfoxide reductase MsrA/MsrB 2 (msrAB2) of Streptococcus pneumoniae serotype 4 (strain ATCC BAA-334 / TIGR4).